Reading from the N-terminus, the 575-residue chain is Hemagglutinin-neuraminidase (575 aa).

The Intravirion portion of the chain corresponds to 1-34 (MAEKGKTNSSYWSTTRNDNSTVNTYIDTPAGKTH). A helical membrane pass occupies residues 35–55 (IWLLIATTMHTILSFIIMILC). The Virion surface segment spans residues 56–575 (IDLIIKQDTC…SIPKICKITS (520 aa)). N-linked (GlcNAc...) asparagine; by host glycosylation is present at Asn-77. Cystine bridges form between Cys-192–Cys-216, Cys-258–Cys-271, Cys-357–Cys-469, and Cys-463–Cys-473. Residues 254–259 (NRKSCS) form an involved in neuraminidase activity region. N-linked (GlcNAc...) asparagine; by host glycans are attached at residues Asn-499 and Asn-511. Residues Cys-535 and Cys-544 are joined by a disulfide bond.

It belongs to the paramyxoviruses hemagglutinin-neuraminidase family. As to quaternary structure, homotetramer; composed of disulfide-linked homodimers. Interacts with F protein trimer.

Its subcellular location is the virion membrane. The protein localises to the host cell membrane. The enzyme catalyses Hydrolysis of alpha-(2-&gt;3)-, alpha-(2-&gt;6)-, alpha-(2-&gt;8)- glycosidic linkages of terminal sialic acid residues in oligosaccharides, glycoproteins, glycolipids, colominic acid and synthetic substrates.. Functionally, attaches the virus to sialic acid-containing cell receptors and thereby initiating infection. Binding of HN protein to the receptor induces a conformational change that allows the F protein to trigger virion/cell membranes fusion. Its function is as follows. Neuraminidase activity ensures the efficient spread of the virus by dissociating the mature virions from the neuraminic acid containing glycoproteins. The polypeptide is Hemagglutinin-neuraminidase (HN) (Human parainfluenza 1 virus (strain Washington/1957) (HPIV-1)).